The sequence spans 634 residues: Fluorothreonine transaldolase (634 aa).

Pyridoxal 5'-phosphate-binding residues include Tyr67, His221, and His247. Position 248 is an N6-(pyridoxal phosphate)lysine (Lys248). Pyridoxal 5'-phosphate is bound at residue Arg375. Positions 428–456 are disordered; that stretch reads TGDPASAAGPPARERYAPPTAPAGHPARP.

It belongs to the SHMT family. The cofactor is pyridoxal 5'-phosphate.

The enzyme catalyses fluoroacetaldehyde + L-threonine = 4-fluoro-L-threonine + acetaldehyde. Functionally, transaldolase that catalyzes the final step in 4-fluorothreonine biosynthesis. Mediates a L-threonine/fluoroaceldehyde to 4-fluoro-L-threonine/acetaldehyde crossover reaction. Can also convert chloroacetaldehyde into 4-chloro-L-threonine. Does not use glycine as a substrate. This Streptantibioticus cattleyicolor (Streptomyces cattleya) protein is Fluorothreonine transaldolase.